The chain runs to 630 residues: Phosphomethylpyrimidine synthase (630 aa).

2 disordered regions span residues 1–22 (MADI…TTGP) and 97–120 (AQRE…VPAF). Residues N224, M253, Y282, H318, 338–340 (SRG), 379–382 (DGLR), and E418 each bind substrate. H422 is a binding site for Zn(2+). Y445 serves as a coordination point for substrate. A Zn(2+)-binding site is contributed by H486. C566, C569, and C574 together coordinate [4Fe-4S] cluster.

The protein belongs to the ThiC family. Homodimer. Requires [4Fe-4S] cluster as cofactor.

The catalysed reaction is 5-amino-1-(5-phospho-beta-D-ribosyl)imidazole + S-adenosyl-L-methionine = 4-amino-2-methyl-5-(phosphooxymethyl)pyrimidine + CO + 5'-deoxyadenosine + formate + L-methionine + 3 H(+). The protein operates within cofactor biosynthesis; thiamine diphosphate biosynthesis. Functionally, catalyzes the synthesis of the hydroxymethylpyrimidine phosphate (HMP-P) moiety of thiamine from aminoimidazole ribotide (AIR) in a radical S-adenosyl-L-methionine (SAM)-dependent reaction. In Sphingopyxis alaskensis (strain DSM 13593 / LMG 18877 / RB2256) (Sphingomonas alaskensis), this protein is Phosphomethylpyrimidine synthase.